Here is a 291-residue protein sequence, read N- to C-terminus: Ribosomal RNA small subunit methyltransferase H (291 aa).

S-adenosyl-L-methionine contacts are provided by residues 31-33 (GGH), Asp-50, Phe-77, Asp-98, and Gln-105.

This sequence belongs to the methyltransferase superfamily. RsmH family.

It is found in the cytoplasm. It catalyses the reaction cytidine(1402) in 16S rRNA + S-adenosyl-L-methionine = N(4)-methylcytidine(1402) in 16S rRNA + S-adenosyl-L-homocysteine + H(+). Functionally, specifically methylates the N4 position of cytidine in position 1402 (C1402) of 16S rRNA. This Endomicrobium trichonymphae protein is Ribosomal RNA small subunit methyltransferase H.